A 191-amino-acid chain; its full sequence is Protein GrpE (191 aa).

Over residues 1–13 the composition is skewed to basic and acidic residues; the sequence is MSEKKNKKEKLAE. The tract at residues 1 to 40 is disordered; that stretch reads MSEKKNKKEKLAEEIEQEELNSLDESVETVEEEATEETLT. Over residues 14–40 the composition is skewed to acidic residues; the sequence is EIEQEELNSLDESVETVEEEATEETLT.

The protein belongs to the GrpE family. Homodimer.

It localises to the cytoplasm. Its function is as follows. Participates actively in the response to hyperosmotic and heat shock by preventing the aggregation of stress-denatured proteins, in association with DnaK and GrpE. It is the nucleotide exchange factor for DnaK and may function as a thermosensor. Unfolded proteins bind initially to DnaJ; upon interaction with the DnaJ-bound protein, DnaK hydrolyzes its bound ATP, resulting in the formation of a stable complex. GrpE releases ADP from DnaK; ATP binding to DnaK triggers the release of the substrate protein, thus completing the reaction cycle. Several rounds of ATP-dependent interactions between DnaJ, DnaK and GrpE are required for fully efficient folding. This is Protein GrpE from Listeria innocua serovar 6a (strain ATCC BAA-680 / CLIP 11262).